A 330-amino-acid polypeptide reads, in one-letter code: Beta-hexosaminidase (330 aa).

Substrate contacts are provided by residues Asp-62, Arg-70, Arg-133, and 163–164; that span reads KH. The active-site Proton donor/acceptor is His-176. The Nucleophile role is filled by Asp-246.

It belongs to the glycosyl hydrolase 3 family. NagZ subfamily.

The protein resides in the cytoplasm. It carries out the reaction Hydrolysis of terminal non-reducing N-acetyl-D-hexosamine residues in N-acetyl-beta-D-hexosaminides.. It functions in the pathway cell wall biogenesis; peptidoglycan recycling. Plays a role in peptidoglycan recycling by cleaving the terminal beta-1,4-linked N-acetylglucosamine (GlcNAc) from peptide-linked peptidoglycan fragments, giving rise to free GlcNAc, anhydro-N-acetylmuramic acid and anhydro-N-acetylmuramic acid-linked peptides. This is Beta-hexosaminidase from Idiomarina loihiensis (strain ATCC BAA-735 / DSM 15497 / L2-TR).